We begin with the raw amino-acid sequence, 209 residues long: MRRTKAEAAETREAILLAAEQVFLERGVNQSTLTEIACYAGVTRGAIYFHFEDKLDIFQSIIGRARFPQEEIMLQAARFDHPNPLHILEQSIVAALELFATDERQQVVFTIINQRCEYVGEMAPVIDRLKEMRSDVLALFIGLLKVAERRGELASEWSAETAAQILLAMVGGFLNEWLHGEKGFDLIIHGSRVISTVIQSLRAPANIPQ.

Residues A9 to Q69 enclose the HTH tetR-type domain. The H-T-H motif DNA-binding region spans T32–F51.

In terms of biological role, represses expression of bepDE. This Brucella suis biovar 1 (strain 1330) protein is HTH-type transcriptional repressor BepR (bepR).